A 194-amino-acid chain; its full sequence is BCL2/adenovirus E1B 19 kDa protein-interacting protein 3 (194 aa).

Positions 1-102 (MSQNGAPGMQ…SQSEEDDIER (102 aa)) are disordered. The span at 42-55 (DMEKILLDAQHESG) shows a compositional bias: basic and acidic residues. Phosphoserine is present on residues serine 54, serine 66, serine 86, serine 92, and serine 95. Low complexity predominate over residues 56 to 69 (RSSSKSSHCDSPPR). Residues 78–88 (RASETDTHSIG) show a composition bias toward basic and acidic residues. The short motif at 100 to 125 (IERRKEVESILKKNSDWIWDWSSRPE) is the BH3 element. A helical membrane pass occupies residues 164 to 184 (VFLPSLLLSHLLAIGLGIYIG).

It belongs to the NIP3 family. As to quaternary structure, homodimer. Binds to BCL2. Interacts with BNIP3L and ACAA2. Interacts (via BH3 domain) with SPATA18 (via coiled-coil domains). Interacts with BOK; promotes BOK oligomerization. Interacts with PPTC7; this interaction promotes BNIP3 degradation. In terms of assembly, (Microbial infection) Interacts with adenovirus E1B 19 kDa protein. (Microbial infection) Interacts with Epstein-Barr virus BHRF1.

The protein resides in the mitochondrion. It localises to the mitochondrion outer membrane. In terms of biological role, apoptosis-inducing protein that can overcome BCL2 suppression. May play a role in repartitioning calcium between the two major intracellular calcium stores in association with BCL2. Involved in mitochondrial quality control via its interaction with SPATA18/MIEAP: in response to mitochondrial damage, participates in mitochondrial protein catabolic process (also named MALM) leading to the degradation of damaged proteins inside mitochondria. The physical interaction of SPATA18/MIEAP, BNIP3 and BNIP3L/NIX at the mitochondrial outer membrane regulates the opening of a pore in the mitochondrial double membrane in order to mediate the translocation of lysosomal proteins from the cytoplasm to the mitochondrial matrix. Plays an important role in the calprotectin (S100A8/A9)-induced cell death pathway. The sequence is that of BCL2/adenovirus E1B 19 kDa protein-interacting protein 3 from Homo sapiens (Human).